A 591-amino-acid polypeptide reads, in one-letter code: DNA ligase (591 aa).

Residues 38–42, 87–88, and Glu-119 each bind NAD(+); these read DEKYD and SL. Lys-121 functions as the N6-AMP-lysine intermediate in the catalytic mechanism. Residues Arg-142, Glu-181, Lys-298, and Lys-322 each contribute to the NAD(+) site. Zn(2+) is bound by residues Cys-415, Cys-418, Cys-433, and Cys-439.

Belongs to the NAD-dependent DNA ligase family. LigA subfamily. It depends on Mg(2+) as a cofactor. Mn(2+) is required as a cofactor.

It carries out the reaction NAD(+) + (deoxyribonucleotide)n-3'-hydroxyl + 5'-phospho-(deoxyribonucleotide)m = (deoxyribonucleotide)n+m + AMP + beta-nicotinamide D-nucleotide.. In terms of biological role, DNA ligase that catalyzes the formation of phosphodiester linkages between 5'-phosphoryl and 3'-hydroxyl groups in double-stranded DNA using NAD as a coenzyme and as the energy source for the reaction. It is essential for DNA replication and repair of damaged DNA. In Wigglesworthia glossinidia brevipalpis, this protein is DNA ligase.